Reading from the N-terminus, the 347-residue chain is S-adenosylmethionine:tRNA ribosyltransferase-isomerase (347 aa).

This sequence belongs to the QueA family. In terms of assembly, monomer.

It is found in the cytoplasm. The catalysed reaction is 7-aminomethyl-7-carbaguanosine(34) in tRNA + S-adenosyl-L-methionine = epoxyqueuosine(34) in tRNA + adenine + L-methionine + 2 H(+). The protein operates within tRNA modification; tRNA-queuosine biosynthesis. In terms of biological role, transfers and isomerizes the ribose moiety from AdoMet to the 7-aminomethyl group of 7-deazaguanine (preQ1-tRNA) to give epoxyqueuosine (oQ-tRNA). The protein is S-adenosylmethionine:tRNA ribosyltransferase-isomerase of Erythrobacter litoralis (strain HTCC2594).